A 68-amino-acid polypeptide reads, in one-letter code: Large ribosomal subunit protein bL35 (68 aa).

The protein belongs to the bacterial ribosomal protein bL35 family.

This Rickettsia akari (strain Hartford) protein is Large ribosomal subunit protein bL35.